Here is a 630-residue protein sequence, read N- to C-terminus: Differentially expressed in FDCP 6 (630 aa).

Tyr210 carries the phosphotyrosine modification. The PH domain maps to 216-312 (DVLKQGYLWK…WTAAIQTAIR (97 aa)). Lys225 carries the N6-acetyllysine modification. 3 disordered regions span residues 318 to 341 (KTSL…RRRA), 378 to 418 (LQEE…ELKK), and 552 to 630 (HPIE…APGN). Composition is skewed to basic and acidic residues over residues 331 to 341 (EQREQRERRRA) and 378 to 392 (LQEE…HKEL). Over residues 588–606 (WGSQGNRTLSVNSSEQKSL) the composition is skewed to polar residues. The residue at position 590 (Ser590) is a Phosphoserine. The segment covering 620 to 630 (QEEKLDPAPGN) has biased composition (basic and acidic residues).

Interacts with IRF4, activated RAC1 and F-actin. Both the phosphorylated and non-phosphorylated forms bind phosphatidylinositol 3,4,5-trisphosphate (PtdInsP3). Interacts with ZAP70. Interacts with RAB11A. In terms of processing, tyrosine-phosphorylated by tyrosine-protein kinase LCK in response to T-cell activation. Thymus.

The protein localises to the cytoplasm. Its subcellular location is the cell membrane. It is found in the nucleus. It localises to the cytoskeleton. The protein resides in the perinuclear region. The protein localises to the cell projection. Its subcellular location is the filopodium. In terms of biological role, phosphatidylinositol 3,4,5-trisphosphate-dependent guanine nucleotide exchange factor (GEF) which plays a role in the activation of Rho GTPases RAC1, RhoA and CDC42. Can regulate cell morphology in cooperation with activated RAC1. Involved in immune homeostasis by ensuring proper trafficking and availability of T-cell regulator CTLA-4 at T-cell surface. Plays a role in Th2 (T helper cells) development and/or activation, perhaps by interfering with ZAP70 signaling. Required for optimal T-cell effector function, lymphocyte homeostasis and the prevention of systemic autoimmunity. The chain is Differentially expressed in FDCP 6 (Def6) from Mus musculus (Mouse).